Reading from the N-terminus, the 313-residue chain is Ribosomal protein L11 methyltransferase (313 aa).

Residues T163, G184, D206, and N249 each contribute to the S-adenosyl-L-methionine site.

The protein belongs to the methyltransferase superfamily. PrmA family.

Its subcellular location is the cytoplasm. It carries out the reaction L-lysyl-[protein] + 3 S-adenosyl-L-methionine = N(6),N(6),N(6)-trimethyl-L-lysyl-[protein] + 3 S-adenosyl-L-homocysteine + 3 H(+). In terms of biological role, methylates ribosomal protein L11. The polypeptide is Ribosomal protein L11 methyltransferase (Brevibacillus brevis (strain 47 / JCM 6285 / NBRC 100599)).